Consider the following 378-residue polypeptide: SPbeta prophage-derived uncharacterized protein YorJ (378 aa).

This Bacillus subtilis (strain 168) protein is SPbeta prophage-derived uncharacterized protein YorJ (yorJ).